Here is a 362-residue protein sequence, read N- to C-terminus: Type-1 angiotensin II receptor A (362 aa).

The Extracellular segment spans residues Met-1–Asn-26. N-linked (GlcNAc...) asparagine glycosylation is found at Asn-3 and Asn-18. Disulfide bonds link Cys-19–Cys-273 and Cys-102–Cys-181. The chain crosses the membrane as a helical span at residues Tyr-27–Ser-56. At Tyr-57–Thr-62 the chain is on the cytoplasmic side. Residues Val-63–Ala-90 traverse the membrane as a helical segment. The Extracellular portion of the chain corresponds to Met-91–Asn-99. A helical membrane pass occupies residues Phe-100–Asp-126. Over Arg-127–Thr-142 the chain is Cytoplasmic. A helical membrane pass occupies residues Ala-143–Ile-166. The Extracellular portion of the chain corresponds to Tyr-167–Tyr-191. Residue Arg-168 participates in angiotensin II binding. Asn-177 carries an N-linked (GlcNAc...) asparagine glycan. Angiotensin II is bound by residues Tyr-185 and Lys-200. Residues Phe-192–Thr-217 form a helical membrane-spanning segment. At Leu-218–Phe-238 the chain is on the cytoplasmic side. Residues Lys-239–Met-267 form a helical membrane-spanning segment. Residues Asp-268 to Asp-277 lie on the Extracellular side of the membrane. The chain crosses the membrane as a helical span at residues Ile-278–Phe-303. At Phe-304–Lys-362 the chain is on the cytoplasmic side. Cys-361 carries S-palmitoyl cysteine lipidation.

It belongs to the G-protein coupled receptor 1 family. C-terminal Ser or Thr residues may be phosphorylated. In terms of tissue distribution, expressed in lung, liver, kidney, and spleen, with highest expression in the heart.

The protein localises to the cell membrane. Its function is as follows. Receptor for angiotensin II, a vasoconstricting peptide, which acts as a key regulator of blood pressure and sodium retention by the kidney. The activated receptor in turn couples to G-alpha proteins G(q) (GNAQ, GNA11, GNA14 or GNA15) and thus activates phospholipase C and increases the cytosolic Ca(2+) concentrations, which in turn triggers cellular responses such as stimulation of protein kinase C. The sequence is that of Type-1 angiotensin II receptor A (agtr1-a) from Xenopus laevis (African clawed frog).